Here is a 299-residue protein sequence, read N- to C-terminus: Tyrosine recombinase XerC (299 aa).

A Core-binding (CB) domain is found at 1-86; the sequence is MRNELLDFLE…AIRSLFKFLT (86 aa). A Tyr recombinase domain is found at 107–293; that stretch reads KLPEFLSIEE…NQARMTEVYN (187 aa). Residues arginine 146, lysine 170, histidine 245, arginine 248, and histidine 271 contribute to the active site. Tyrosine 280 (O-(3'-phospho-DNA)-tyrosine intermediate) is an active-site residue.

It belongs to the 'phage' integrase family. XerC subfamily. In terms of assembly, forms a cyclic heterotetrameric complex composed of two molecules of XerC and two molecules of XerD.

It is found in the cytoplasm. Functionally, site-specific tyrosine recombinase, which acts by catalyzing the cutting and rejoining of the recombining DNA molecules. The XerC-XerD complex is essential to convert dimers of the bacterial chromosome into monomers to permit their segregation at cell division. It also contributes to the segregational stability of plasmids. The polypeptide is Tyrosine recombinase XerC (Natranaerobius thermophilus (strain ATCC BAA-1301 / DSM 18059 / JW/NM-WN-LF)).